A 196-amino-acid polypeptide reads, in one-letter code: Large ribosomal subunit protein uL10 (196 aa).

The tract at residues 167–196 (EKKAAEGPAEAPQPATEPPAEAPEAPADAE) is disordered.

It belongs to the universal ribosomal protein uL10 family. In terms of assembly, part of the ribosomal stalk of the 50S ribosomal subunit. The N-terminus interacts with L11 and the large rRNA to form the base of the stalk. The C-terminus forms an elongated spine to which L12 dimers bind in a sequential fashion forming a multimeric L10(L12)X complex.

Functionally, forms part of the ribosomal stalk, playing a central role in the interaction of the ribosome with GTP-bound translation factors. The chain is Large ribosomal subunit protein uL10 from Mycolicibacterium paratuberculosis (strain ATCC BAA-968 / K-10) (Mycobacterium paratuberculosis).